We begin with the raw amino-acid sequence, 621 residues long: tRNA 5-methylaminomethyl-2-thiouridine biosynthesis bifunctional protein MnmC (621 aa).

Residues 1-222 (MKNANLSFKG…KRQMSSAVLE (222 aa)) are tRNA (mnm(5)s(2)U34)-methyltransferase. Residues 250 to 621 (IGTGVAGLAT…LIRKLKKGLK (372 aa)) are FAD-dependent cmnm(5)s(2)U34 oxidoreductase.

It in the N-terminal section; belongs to the methyltransferase superfamily. tRNA (mnm(5)s(2)U34)-methyltransferase family. The protein in the C-terminal section; belongs to the DAO family. Requires FAD as cofactor.

Its subcellular location is the cytoplasm. The enzyme catalyses 5-aminomethyl-2-thiouridine(34) in tRNA + S-adenosyl-L-methionine = 5-methylaminomethyl-2-thiouridine(34) in tRNA + S-adenosyl-L-homocysteine + H(+). Catalyzes the last two steps in the biosynthesis of 5-methylaminomethyl-2-thiouridine (mnm(5)s(2)U) at the wobble position (U34) in tRNA. Catalyzes the FAD-dependent demodification of cmnm(5)s(2)U34 to nm(5)s(2)U34, followed by the transfer of a methyl group from S-adenosyl-L-methionine to nm(5)s(2)U34, to form mnm(5)s(2)U34. This Campylobacter concisus (strain 13826) protein is tRNA 5-methylaminomethyl-2-thiouridine biosynthesis bifunctional protein MnmC.